A 270-amino-acid chain; its full sequence is uncharacterized protein (270 aa).

The protein localises to the cytoplasm. This is an uncharacterized protein from Schizosaccharomyces pombe (strain 972 / ATCC 24843) (Fission yeast).